A 353-amino-acid polypeptide reads, in one-letter code: UPF0283 membrane protein YcjF (353 aa).

A compositionally biased stretch (basic and acidic residues) spans 1 to 19; sequence MSEPLKPRIDFAEPLKEEP. The segment at 1–35 is disordered; sequence MSEPLKPRIDFAEPLKEEPTSAFKAQQTFSEAESR. The next 3 membrane-spanning stretches (helical) occupy residues 70 to 90, 100 to 120, and 213 to 233; these read MVMGGLALFGASVVGQGVQWT, VALGGCAAGALIVGAGVGSVV, and ESTLMIAVSPLALVDMAFIAW.

Belongs to the UPF0283 family.

Its subcellular location is the cell inner membrane. This chain is UPF0283 membrane protein YcjF, found in Salmonella paratyphi B (strain ATCC BAA-1250 / SPB7).